We begin with the raw amino-acid sequence, 367 residues long: uncharacterized protein (367 aa).

This sequence to M.tuberculosis Rv0502.

This is an uncharacterized protein from Mycobacterium leprae (strain TN).